We begin with the raw amino-acid sequence, 447 residues long: Interferon-induced protein 44-like (447 aa).

Residues 1 to 159 (MKVTARLTWI…PVECEIFRVD (159 aa)) enclose the TLDc domain.

The protein belongs to the IFI44 family. HA-28 antigen forms a complex with Kb MHC in BALB.B donor cells. Interacts with FKBP5; this interaction modulates IKBKB and IKBKE kinase activities. As to expression, expressed on cells of the hematopoietic lineage. Detected in transformed cell lines of the macrophage and B-cell lineage. Expressed in spleen and bone marrow.

The protein resides in the cytoplasm. Functionally, type I interferon-stimulated gene (ISG) that plays a critical role in antiviral and antibacterial activity. During bacterial infection, promotes macrophage differentiation and facilitates inflammatory cytokine secretion. Plays a role in the control of respiratory syncycial virus/RSV infection, reducing the ability of the virus to replicate. Acts as a feedback regulator of IFN responses by negatively regulating IKBKB kinase activity through interaction with FKBP5. In terms of biological role, precursor of the histocompatibility antigen HA-28 in BALB.B mice. More generally, minor histocompatibility antigens refer to immunogenic peptide which, when complexed with MHC, can generate an immune response after recognition by specific T-cells. The peptides are derived from polymorphic intracellular proteins, which are cleaved by normal pathways of antigen processing. The binding of these peptides to MHC molecules and its expression on the cell surface can stimulate T-cell responses and thereby trigger graft rejection or graft-versus-host disease (GVHD). More specifically, HA-28 minor antigen is transcribed in the BALB.B donor but not in host C57BL/6 cells. HA-28 is presented to the donor BALB.B cell surface by Kb MHC. This complex HA-28/Kb MHC elicits cytotoxic T-cell response in C57BL/6 mice immunized with BALB.B spleen cells. It induces C57BL/6 mice cells recognition and lysis by CD8 T-cell from BALB.B mice. The chain is Interferon-induced protein 44-like (Ifi44l) from Mus musculus (Mouse).